We begin with the raw amino-acid sequence, 360 residues long: Phospho-N-acetylmuramoyl-pentapeptide-transferase (360 aa).

10 consecutive transmembrane segments (helical) span residues 26-46 (AILG…KMIA), 73-93 (TMGG…WGDL), 97-117 (YVWV…IDDY), 132-152 (WKYL…YASA), 168-188 (VMPQ…VGSS), 199-219 (GLAI…AYLS), 236-256 (AGEL…FLWF), 263-283 (VFMG…IAVL), 288-308 (ILLV…ILQV), and 338-358 (VIVR…ATLK).

This sequence belongs to the glycosyltransferase 4 family. MraY subfamily. It depends on Mg(2+) as a cofactor.

It localises to the cell inner membrane. The enzyme catalyses UDP-N-acetyl-alpha-D-muramoyl-L-alanyl-gamma-D-glutamyl-meso-2,6-diaminopimeloyl-D-alanyl-D-alanine + di-trans,octa-cis-undecaprenyl phosphate = di-trans,octa-cis-undecaprenyl diphospho-N-acetyl-alpha-D-muramoyl-L-alanyl-D-glutamyl-meso-2,6-diaminopimeloyl-D-alanyl-D-alanine + UMP. It participates in cell wall biogenesis; peptidoglycan biosynthesis. Its function is as follows. Catalyzes the initial step of the lipid cycle reactions in the biosynthesis of the cell wall peptidoglycan: transfers peptidoglycan precursor phospho-MurNAc-pentapeptide from UDP-MurNAc-pentapeptide onto the lipid carrier undecaprenyl phosphate, yielding undecaprenyl-pyrophosphoryl-MurNAc-pentapeptide, known as lipid I. The sequence is that of Phospho-N-acetylmuramoyl-pentapeptide-transferase from Shewanella halifaxensis (strain HAW-EB4).